The following is a 319-amino-acid chain: HTH-type transcriptional regulator YidZ (319 aa).

Residues 8–65 (LDLNLLLCLQLLMQERSVTKAAKRMNVTPSAVSKSLAKLRAWFDDPLFVNTPLGLAPT) form the HTH lysR-type domain. The segment at residues 25–44 (VTKAAKRMNVTPSAVSKSLA) is a DNA-binding region (H-T-H motif).

The protein belongs to the LysR transcriptional regulatory family.

In terms of biological role, involved in anaerobic NO protection. This Salmonella agona (strain SL483) protein is HTH-type transcriptional regulator YidZ.